The chain runs to 639 residues: MLTHYQLCFQKRSSQNYTVPDPTSCFDVPPWTILCQRATMIMHNNSSALPLFSNVSSFWKRDSHGPGLLDEGASLIGSYDSPETTESFPFSTVETTNSSLNATIKDPLGGHAVWQVVLIAFLTGIIALVTIIGNILVIVSFKVNKQLKTVNNYFLLSLACADLIIGVISMNLFTTYIIMGHWALGNLACDLWLSIDYVASNASVMNLLVISFDRYFSITRPLTYRAKRTTKRAGVMIGLAWIISFVLWAPAILFWQYFVGKRTVPLDECFIQFLSEPIITFGTAIAAFYLPVTIMSILYWRIYKETEKRTKELAGLQASGSEAETARFVHQTGSSRSLSSYELQRQSTKRSSRRKYRRCHFWLTMKSWEPNTDQGDQEHSSSDSWNNNDAAASLENSASSDEEDITAETRAIYSIVLKLPGHSAILNSTKLPSSEDLNESADELQKSDTDSQEKKPKKLQPPKSIQDGGSFQKSFSKLPIQPGSAETATASDGISSVTKTSAALPLSFKEATLAKKFALKTRSQITKRKRMSLIKEKKAAQTLSAILFAFIITWTPYNIMVLVNTFCDCVPKTVWNLGYWLCYINSTVNPVCYALCNKMFRNTFKMLLLCQCDKRKRRKQQYQQRQSVIFHKRIPREAS.

The Extracellular segment spans residues 1-115 (MLTHYQLCFQ…DPLGGHAVWQ (115 aa)). Asn16, Asn44, Asn45, Asn54, Asn97, and Asn101 each carry an N-linked (GlcNAc...) asparagine glycan. A helical transmembrane segment spans residues 116–139 (VVLIAFLTGIIALVTIIGNILVIV). Topologically, residues 140 to 152 (SFKVNKQLKTVNN) are cytoplasmic. The chain crosses the membrane as a helical span at residues 153–173 (YFLLSLACADLIIGVISMNLF). Residues 174 to 190 (TTYIIMGHWALGNLACD) lie on the Extracellular side of the membrane. Cys189 and Cys269 form a disulfide bridge. The chain crosses the membrane as a helical span at residues 191–212 (LWLSIDYVASNASVMNLLVISF). At 213-232 (DRYFSITRPLTYRAKRTTKR) the chain is on the cytoplasmic side. Residues 233-255 (AGVMIGLAWIISFVLWAPAILFW) traverse the membrane as a helical segment. Residues 256–277 (QYFVGKRTVPLDECFIQFLSEP) lie on the Extracellular side of the membrane. Residues 278–300 (IITFGTAIAAFYLPVTIMSILYW) form a helical membrane-spanning segment. The Cytoplasmic portion of the chain corresponds to 301 to 542 (RIYKETEKRT…LIKEKKAAQT (242 aa)). Disordered stretches follow at residues 370–404 (PNTD…DEED) and 431–471 (LPSS…GGSF). A compositionally biased stretch (low complexity) spans 382–393 (SDSWNNNDAAAS). Residues 443–454 (ELQKSDTDSQEK) are compositionally biased toward basic and acidic residues. A helical membrane pass occupies residues 543–563 (LSAILFAFIITWTPYNIMVLV). Residues 564–576 (NTFCDCVPKTVWN) are Extracellular-facing. A helical membrane pass occupies residues 577-596 (LGYWLCYINSTVNPVCYALC). Over 597–639 (NKMFRNTFKMLLLCQCDKRKRRKQQYQQRQSVIFHKRIPREAS) the chain is Cytoplasmic.

Belongs to the G-protein coupled receptor 1 family. Muscarinic acetylcholine receptor subfamily. CHRM3 sub-subfamily. As to expression, brain, heart atria, and ventricle.

It localises to the cell membrane. The protein localises to the postsynaptic cell membrane. The muscarinic acetylcholine receptor mediates various cellular responses, including inhibition of adenylate cyclase, breakdown of phosphoinositides and modulation of potassium channels through the action of G proteins. Primary transducing effect is Pi turnover. This Gallus gallus (Chicken) protein is Muscarinic acetylcholine receptor M3 (CHRM3).